We begin with the raw amino-acid sequence, 384 residues long: Glucans biosynthesis protein C (384 aa).

Transmembrane regions (helical) follow at residues 17-37 (AWLM…THSW), 54-74 (FIHA…SYML), 91-111 (VGIP…ILLQ), 140-160 (LWFL…FTWF), 173-193 (AISL…YAAI), 212-232 (FIVM…LAFI), 240-260 (FTTP…AYLL), 274-294 (TESV…FSLG), 311-331 (ASLF…AYIT), and 338-358 (LIGF…LYEI).

This sequence belongs to the acyltransferase 3 family. OpgC subfamily.

Its subcellular location is the cell membrane. Its pathway is glycan metabolism; osmoregulated periplasmic glucan (OPG) biosynthesis. Necessary for the succinyl substitution of periplasmic glucans. Could catalyze the transfer of succinyl residues from the cytoplasmic side of the membrane to the nascent glucan backbones on the periplasmic side of the membrane. In Salmonella agona (strain SL483), this protein is Glucans biosynthesis protein C.